The following is an 80-amino-acid chain: Metallothionein-like protein type 2 (80 aa).

This sequence belongs to the metallothionein superfamily. Type 15 family.

Metallothioneins have a high content of cysteine residues that bind various heavy metals. This Brassica campestris (Field mustard) protein is Metallothionein-like protein type 2.